The primary structure comprises 197 residues: Elongation factor Ts (197 aa).

Residues 81–84 (TDFV) form an involved in Mg(2+) ion dislocation from EF-Tu region.

The protein belongs to the EF-Ts family.

It is found in the cytoplasm. Functionally, associates with the EF-Tu.GDP complex and induces the exchange of GDP to GTP. It remains bound to the aminoacyl-tRNA.EF-Tu.GTP complex up to the GTP hydrolysis stage on the ribosome. This is Elongation factor Ts from Fervidobacterium nodosum (strain ATCC 35602 / DSM 5306 / Rt17-B1).